We begin with the raw amino-acid sequence, 318 residues long: NADH-ubiquinone oxidoreductase chain 1 (318 aa).

8 consecutive transmembrane segments (helical) span residues 2 to 22 (FLINTLLLILPVLLAMAFLTL), 69 to 89 (LLFIIAPTLALTLALSMWLPI), 102 to 122 (ILFILATSSLAVYSILWSGWA), 146 to 166 (LAIILLCILLMNGSFTLSSLI), 171 to 191 (YMWILLPAWPLAMMWFISTLA), 222 to 242 (LFFLAEYTNIILMNALTAILF), 253 to 273 (EMFTVNFATKTLLLTMTFLWI), and 294 to 314 (LPLTLALCMWHISMPIMLSSI).

This sequence belongs to the complex I subunit 1 family. In terms of assembly, core subunit of respiratory chain NADH dehydrogenase (Complex I) which is composed of 45 different subunits.

Its subcellular location is the mitochondrion inner membrane. The catalysed reaction is a ubiquinone + NADH + 5 H(+)(in) = a ubiquinol + NAD(+) + 4 H(+)(out). Functionally, core subunit of the mitochondrial membrane respiratory chain NADH dehydrogenase (Complex I) which catalyzes electron transfer from NADH through the respiratory chain, using ubiquinone as an electron acceptor. Essential for the catalytic activity and assembly of complex I. This chain is NADH-ubiquinone oxidoreductase chain 1 (MT-ND1), found in Oryctolagus cuniculus (Rabbit).